The sequence spans 333 residues: Adenosine deaminase (333 aa).

His-12 and His-14 together coordinate Zn(2+). Residues His-14, Asp-16, and Gly-170 each contribute to the substrate site. Residue His-197 participates in Zn(2+) binding. Glu-200 (proton donor) is an active-site residue. Residue Asp-278 participates in Zn(2+) binding. Asp-279 is a binding site for substrate.

Belongs to the metallo-dependent hydrolases superfamily. Adenosine and AMP deaminases family. Adenosine deaminase subfamily. Zn(2+) serves as cofactor.

The enzyme catalyses adenosine + H2O + H(+) = inosine + NH4(+). It catalyses the reaction 2'-deoxyadenosine + H2O + H(+) = 2'-deoxyinosine + NH4(+). Its function is as follows. Catalyzes the hydrolytic deamination of adenosine and 2-deoxyadenosine. In Salmonella enteritidis PT4 (strain P125109), this protein is Adenosine deaminase.